The sequence spans 372 residues: NAD(P)H-quinone oxidoreductase subunit 1 (372 aa).

The next 8 helical transmembrane spans lie at 27–47 (LIWL…GVLV), 97–117 (LLFT…WLIV), 128–148 (VGIG…GLLM), 166–186 (AAQS…VVMM), 204–224 (LLSW…ICAL), 266–286 (VLSS…PIPV), 308–328 (SVGI…AILL), and 347–367 (FLLP…LAFP).

The protein belongs to the complex I subunit 1 family. NDH-1 is composed of at least 11 different subunits.

The protein localises to the cellular thylakoid membrane. It carries out the reaction a plastoquinone + NADH + (n+1) H(+)(in) = a plastoquinol + NAD(+) + n H(+)(out). The enzyme catalyses a plastoquinone + NADPH + (n+1) H(+)(in) = a plastoquinol + NADP(+) + n H(+)(out). NDH-1 shuttles electrons from an unknown electron donor, via FMN and iron-sulfur (Fe-S) centers, to quinones in the respiratory and/or the photosynthetic chain. The immediate electron acceptor for the enzyme in this species is believed to be plastoquinone. Couples the redox reaction to proton translocation, and thus conserves the redox energy in a proton gradient. The protein is NAD(P)H-quinone oxidoreductase subunit 1 of Prochlorococcus marinus (strain MIT 9313).